The following is a 257-amino-acid chain: ATP synthase subunit a (257 aa).

A propeptide spans 1-8 (removed in mature form); it reads MRHLDFVL. 7 consecutive transmembrane segments (helical) span residues 34–54, 93–113, 122–142, 149–169, 187–207, 210–230, and 231–251; these read LTNI…YSLL, FFPL…IGLV, HFIL…ILGF, FFSL…LVLI, ANIL…YNIM, GIIF…FSGL, and ELAI…SYIK.

This sequence belongs to the ATPase A chain family. In terms of assembly, F-type ATPases have 2 components, CF(1) - the catalytic core - and CF(0) - the membrane proton channel. CF(1) has five subunits: alpha(3), beta(3), gamma(1), delta(1), epsilon(1). CF(0) has three main subunits: a, b and c.

The protein localises to the mitochondrion inner membrane. In terms of biological role, mitochondrial membrane ATP synthase (F(1)F(0) ATP synthase or Complex V) produces ATP from ADP in the presence of a proton gradient across the membrane which is generated by electron transport complexes of the respiratory chain. F-type ATPases consist of two structural domains, F(1) - containing the extramembraneous catalytic core and F(0) - containing the membrane proton channel, linked together by a central stalk and a peripheral stalk. During catalysis, ATP synthesis in the catalytic domain of F(1) is coupled via a rotary mechanism of the central stalk subunits to proton translocation. Key component of the proton channel; it may play a direct role in the translocation of protons across the membrane. This is ATP synthase subunit a (atp6) from Penicillium chrysogenum (Penicillium notatum).